A 643-amino-acid polypeptide reads, in one-letter code: Protein cueball (643 aa).

Positions 1 to 21 (MMIWVPALIFLSACLLPRSNG) are cleaved as a signal peptide. The Extracellular portion of the chain corresponds to 22–530 (TPLEWDFAVT…VCQTPFVWTS (509 aa)). Residues asparagine 77 and asparagine 103 are each glycosylated (N-linked (GlcNAc...) asparagine). LDL-receptor class B repeat units lie at residues 116–163 (RNLF…DICR), 164–208 (RKLY…DQLS), and 209–254 (DRLF…TNDA). The N-linked (GlcNAc...) asparagine glycan is linked to asparagine 172. Positions 276–290 (ATTTVRPEVESSTDG) are enriched in polar residues. Residues 276 to 303 (ATTTVRPEVESSTDGTESESKQESEPVE) are disordered. Asparagine 312 is a glycosylation site (N-linked (GlcNAc...) asparagine). 3 EGF-like domains span residues 363 to 397 (RMDQ…SRCE), 398 to 429 (IREC…FTGE), and 432 to 470 (EVSN…ERCE). Intrachain disulfides connect cysteine 372–cysteine 385, cysteine 387–cysteine 396, cysteine 401–cysteine 410, cysteine 405–cysteine 420, cysteine 436–cysteine 446, cysteine 440–cysteine 458, and cysteine 460–cysteine 469. Asparagine 472 and asparagine 507 each carry an N-linked (GlcNAc...) asparagine glycan. A helical transmembrane segment spans residues 531–551 (SVIIILVVGIVFSLLLITTII). The Cytoplasmic portion of the chain corresponds to 552–643 (HGIRRLYKPK…LIHNMEDDLY (92 aa)).

Belongs to the cueball family.

The protein resides in the cell membrane. Functionally, has a role in spermatogenesis and oogenesis. This chain is Protein cueball, found in Drosophila ananassae (Fruit fly).